Consider the following 475-residue polypeptide: 3-isopropylmalate dehydratase large subunit (475 aa).

[4Fe-4S] cluster-binding residues include Cys349, Cys409, and Cys412.

The protein belongs to the aconitase/IPM isomerase family. LeuC type 1 subfamily. In terms of assembly, heterodimer of LeuC and LeuD. The cofactor is [4Fe-4S] cluster.

The enzyme catalyses (2R,3S)-3-isopropylmalate = (2S)-2-isopropylmalate. Its pathway is amino-acid biosynthesis; L-leucine biosynthesis; L-leucine from 3-methyl-2-oxobutanoate: step 2/4. Functionally, catalyzes the isomerization between 2-isopropylmalate and 3-isopropylmalate, via the formation of 2-isopropylmaleate. The chain is 3-isopropylmalate dehydratase large subunit from Cereibacter sphaeroides (strain KD131 / KCTC 12085) (Rhodobacter sphaeroides).